A 40-amino-acid chain; its full sequence is Auxin-responsive endogenous peptide 1 (40 aa).

Residues 7-29 traverse the membrane as a helical segment; sequence LIYRLVVRCFLDYSICAPFYFYH.

Expressed in cotyledons, hypocotyls, roots, newly developing leaves and shoot apical meristem. Not detected in flowers, siliques or mature leaves.

Its subcellular location is the cytoplasm. It localises to the nucleus. It is found in the membrane. Functionally, negative regulator of the auxin response. The protein is Auxin-responsive endogenous peptide 1 of Arabidopsis thaliana (Mouse-ear cress).